We begin with the raw amino-acid sequence, 385 residues long: Mannitol-1-phosphate 5-dehydrogenase (385 aa).

3-14 (ALQFGAGNIGRG) contributes to the NAD(+) binding site.

This sequence belongs to the mannitol dehydrogenase family.

It catalyses the reaction D-mannitol 1-phosphate + NAD(+) = beta-D-fructose 6-phosphate + NADH + H(+). This Buchnera aphidicola subsp. Acyrthosiphon pisum (strain APS) (Acyrthosiphon pisum symbiotic bacterium) protein is Mannitol-1-phosphate 5-dehydrogenase (mtlD).